Consider the following 56-residue polypeptide: MAVQQNKPTRSKRGMRRSHDALTAPLLSVDKTSGETHLRHHVTADGYYRGRKVINK.

The tract at residues 1–37 (MAVQQNKPTRSKRGMRRSHDALTAPLLSVDKTSGETH) is disordered.

It belongs to the bacterial ribosomal protein bL32 family.

The protein is Large ribosomal subunit protein bL32 of Photorhabdus laumondii subsp. laumondii (strain DSM 15139 / CIP 105565 / TT01) (Photorhabdus luminescens subsp. laumondii).